The sequence spans 191 residues: Acireductone dioxygenase 2 (191 aa).

Fe(2+)-binding residues include H102, H104, E108, and H146. Positions 102, 104, 108, and 146 each coordinate Ni(2+).

This sequence belongs to the acireductone dioxygenase (ARD) family. As to quaternary structure, monomer. It depends on Fe(2+) as a cofactor. The cofactor is Ni(2+).

It carries out the reaction 1,2-dihydroxy-5-(methylsulfanyl)pent-1-en-3-one + O2 = 3-(methylsulfanyl)propanoate + CO + formate + 2 H(+). The catalysed reaction is 1,2-dihydroxy-5-(methylsulfanyl)pent-1-en-3-one + O2 = 4-methylsulfanyl-2-oxobutanoate + formate + 2 H(+). It participates in amino-acid biosynthesis; L-methionine biosynthesis via salvage pathway; L-methionine from S-methyl-5-thio-alpha-D-ribose 1-phosphate: step 5/6. In terms of biological role, catalyzes 2 different reactions between oxygen and the acireductone 1,2-dihydroxy-3-keto-5-methylthiopentene (DHK-MTPene) depending upon the metal bound in the active site. Fe-containing acireductone dioxygenase (Fe-ARD) produces formate and 2-keto-4-methylthiobutyrate (KMTB), the alpha-ketoacid precursor of methionine in the methionine recycle pathway. Ni-containing acireductone dioxygenase (Ni-ARD) produces methylthiopropionate, carbon monoxide and formate, and does not lie on the methionine recycle pathway. The sequence is that of Acireductone dioxygenase 2 from Nocardia farcinica (strain IFM 10152).